The sequence spans 114 residues: Large ribosomal subunit protein uL22 (114 aa).

Belongs to the universal ribosomal protein uL22 family. In terms of assembly, part of the 50S ribosomal subunit.

Functionally, this protein binds specifically to 23S rRNA; its binding is stimulated by other ribosomal proteins, e.g. L4, L17, and L20. It is important during the early stages of 50S assembly. It makes multiple contacts with different domains of the 23S rRNA in the assembled 50S subunit and ribosome. In terms of biological role, the globular domain of the protein is located near the polypeptide exit tunnel on the outside of the subunit, while an extended beta-hairpin is found that lines the wall of the exit tunnel in the center of the 70S ribosome. The protein is Large ribosomal subunit protein uL22 of Streptococcus gordonii (strain Challis / ATCC 35105 / BCRC 15272 / CH1 / DL1 / V288).